We begin with the raw amino-acid sequence, 261 residues long: Ribosomal RNA small subunit methyltransferase J (261 aa).

Residues 109 to 110 (RD), 125 to 126 (ER), and aspartate 179 contribute to the S-adenosyl-L-methionine site.

The protein belongs to the methyltransferase superfamily. RsmJ family.

Its subcellular location is the cytoplasm. It carries out the reaction guanosine(1516) in 16S rRNA + S-adenosyl-L-methionine = N(2)-methylguanosine(1516) in 16S rRNA + S-adenosyl-L-homocysteine + H(+). In terms of biological role, specifically methylates the guanosine in position 1516 of 16S rRNA. This Pseudomonas aeruginosa (strain UCBPP-PA14) protein is Ribosomal RNA small subunit methyltransferase J.